A 256-amino-acid chain; its full sequence is Ubiquinone/menaquinone biosynthesis C-methyltransferase UbiE (256 aa).

Residues Thr79, Asp100, and 128-129 each bind S-adenosyl-L-methionine; that span reads DA.

This sequence belongs to the class I-like SAM-binding methyltransferase superfamily. MenG/UbiE family.

The catalysed reaction is a 2-demethylmenaquinol + S-adenosyl-L-methionine = a menaquinol + S-adenosyl-L-homocysteine + H(+). It catalyses the reaction a 2-methoxy-6-(all-trans-polyprenyl)benzene-1,4-diol + S-adenosyl-L-methionine = a 5-methoxy-2-methyl-3-(all-trans-polyprenyl)benzene-1,4-diol + S-adenosyl-L-homocysteine + H(+). It participates in quinol/quinone metabolism; menaquinone biosynthesis; menaquinol from 1,4-dihydroxy-2-naphthoate: step 2/2. It functions in the pathway cofactor biosynthesis; ubiquinone biosynthesis. In terms of biological role, methyltransferase required for the conversion of demethylmenaquinol (DMKH2) to menaquinol (MKH2) and the conversion of 2-polyprenyl-6-methoxy-1,4-benzoquinol (DDMQH2) to 2-polyprenyl-3-methyl-6-methoxy-1,4-benzoquinol (DMQH2). The sequence is that of Ubiquinone/menaquinone biosynthesis C-methyltransferase UbiE from Pseudomonas fluorescens (strain Pf0-1).